Here is a 230-residue protein sequence, read N- to C-terminus: Acetyltransferase (230 aa).

The N-acetyltransferase domain maps to 143 to 230; that stretch reads RYLDGKVICD…RVAVYKARQT (88 aa).

It functions in the pathway mycotoxin biosynthesis. Acetyltransferase; part of the satratoxin SC3 cluster involved in the biosynthesis of satratoxins, trichothecene mycotoxins that are associated with human food poisonings. Satratoxins are suggested to be made by products of multiple gene clusters (SC1, SC2 and SC3) that encode 21 proteins in all, including polyketide synthases, acetyltransferases, and other enzymes expected to modify the trichothecene skeleton. SC1 encodes 10 proteins, SAT1 to SAT10. The largest are SAT8, which encodes a putative polyketide synthase (PKS) with a conventional non-reducing architecture, and SAT10, a putative protein containing four ankyrin repeats and thus may be involved in protein scaffolding. The putative short-chain reductase SAT3 may assist the PKS in some capacity. SAT6 contains a secretory lipase domain and acts probably as a trichothecene esterase. SAT5 encodes a putative acetyltransferase, and so, with SAT6, may affect endogenous protection from toxicity. The probable transcription factor SAT9 may regulate the expression of the SC1 cluster. SC2 encodes proteins SAT11 to SAT16, the largest of which encodes the putative reducing PKS SAT13. SAT11 is a cytochrome P450 monooxygenase, while SAT14 and SAT16 are probable acetyltransferases. The SC2 cluster may be regulated by the transcription factor SAT15. SC3 is a small cluster that encodes 5 proteins, SAT17 to SAT21. SAT21 is a putative MFS-type transporter which may have a role in exporting secondary metabolites. The four other proteins putatively encoded in SC3 include the taurine hydroxylase-like protein SAT17, the O-methyltransferase SAT18, the acetyltransferase SAT19, and the Cys6-type zinc finger SAT20, the latter being probably involved in regulation of SC3 expression. The sequence is that of Acetyltransferase from Stachybotrys chartarum (strain CBS 109288 / IBT 7711) (Toxic black mold).